Consider the following 1369-residue polypeptide: Rho-associated protein kinase 1 (1369 aa).

An N-acetylserine modification is found at Ser2. Residues 76-338 (YEVVKVIGRG…VEEIKRHLFF (263 aa)) enclose the Protein kinase domain. ATP contacts are provided by residues 82–90 (IGRGAFGEV) and Lys105. Asp198 serves as the catalytic Proton acceptor. In terms of domain architecture, AGC-kinase C-terminal spans 341 to 409 (DQWAWETLRD…YSNRRYLPSA (69 aa)). Positions 368–727 (FDDLEEDKGD…KKLKEEREAR (360 aa)) are interaction with FHOD1. Residues 422 to 692 (KNVQESLQKT…RLEQEVNEHK (271 aa)) are a coiled coil. An REM-1 domain is found at 479-556 (SAVSQIEKEK…LEEANDLLRT (78 aa)). Residues 707-946 (EAKSVAMCEM…TVSRLEEANN (240 aa)) are SHROOM3 binding. The RhoBD domain maps to 949-1015 (TKDIELLRKE…LAEIMNRKDF (67 aa)). Positions 998–1010 (LKTQAVNKLAEIM) are RHOA binding. Residues 1011-1102 (NRKDFKIDRK…KLLDLSDSTS (92 aa)) adopt a coiled-coil conformation. Phosphoserine occurs at positions 1105 and 1108. The auto-inhibitory stretch occupies residues 1115–1369 (NLPVGSACIP…VVKNTSGKTS (255 aa)). One can recognise a PH domain in the interval 1133-1332 (SSRIEGWLSV…WVTHLVKKIP (200 aa)). The segment at 1243-1298 (GHEFIPTLYHFPANCEACAKPLWHVFKPPPALECRRCHVKSHRDHLDKKEDLIPPC) adopts a Phorbol-ester/DAG-type zinc-finger fold. A Phosphoserine modification is found at Ser1343.

It belongs to the protein kinase superfamily. AGC Ser/Thr protein kinase family. Homodimer. Interacts with GEM, MYLC2B, RHOE, LIMK1, LIMK2, TSG101, CHORDC1, DAPK3, PFN1, PTEN and JIP3. Interacts with FHOD1 in a Src-dependent manner. Interacts with ITGB1BP1 (via N-terminus and PTB domain). Interacts with RHOA (activated by GTP), RHOB, RHOC and PPP1R12A. Interacts with SHROOM3. The cofactor is Mg(2+). Post-translationally, autophosphorylated on serine and threonine residues. Cleaved by caspase-3 during apoptosis. This leads to constitutive activation of the kinase and membrane blebbing. Highly expressed in brain, spleen, lung, liver, skeletal muscle, kidney and testis.

The protein localises to the cytoplasm. It localises to the cytoskeleton. It is found in the microtubule organizing center. The protein resides in the centrosome. Its subcellular location is the centriole. The protein localises to the golgi apparatus membrane. It localises to the cell projection. It is found in the bleb. The protein resides in the cell membrane. Its subcellular location is the lamellipodium. The protein localises to the ruffle. It carries out the reaction L-seryl-[protein] + ATP = O-phospho-L-seryl-[protein] + ADP + H(+). It catalyses the reaction L-threonyl-[protein] + ATP = O-phospho-L-threonyl-[protein] + ADP + H(+). Its activity is regulated as follows. Activated by RHOA binding. Inhibited by Y-27632. Its function is as follows. Protein kinase which is a key regulator of the actin cytoskeleton and cell polarity. Involved in regulation of smooth muscle contraction, actin cytoskeleton organization, stress fiber and focal adhesion formation, neurite retraction, cell adhesion and motility via phosphorylation of DAPK3, GFAP, LIMK1, LIMK2, MYL9/MLC2, TPPP, PFN1 and PPP1R12A. Phosphorylates FHOD1 and acts synergistically with it to promote SRC-dependent non-apoptotic plasma membrane blebbing. Phosphorylates JIP3 and regulates the recruitment of JNK to JIP3 upon UVB-induced stress. Acts as a suppressor of inflammatory cell migration by regulating PTEN phosphorylation and stability. Acts as a negative regulator of VEGF-induced angiogenic endothelial cell activation. Required for centrosome positioning and centrosome-dependent exit from mitosis. Plays a role in terminal erythroid differentiation. Inhibits podocyte motility via regulation of actin cytoskeletal dynamics and phosphorylation of CFL1. Promotes keratinocyte terminal differentiation. Involved in osteoblast compaction through the fibronectin fibrillogenesis cell-mediated matrix assembly process, essential for osteoblast mineralization. May regulate closure of the eyelids and ventral body wall by inducing the assembly of actomyosin bundles. The polypeptide is Rho-associated protein kinase 1 (Rock1) (Rattus norvegicus (Rat)).